Here is a 266-residue protein sequence, read N- to C-terminus: Undecaprenyl-diphosphatase (266 aa).

7 consecutive transmembrane segments (helical) span residues proline 39 to phenylalanine 59, serine 86 to proline 106, valine 112 to leucine 132, leucine 153 to isoleucine 173, phenylalanine 189 to serine 209, isoleucine 216 to isoleucine 236, and asparagine 246 to leucine 266.

This sequence belongs to the UppP family.

It localises to the cell inner membrane. It catalyses the reaction di-trans,octa-cis-undecaprenyl diphosphate + H2O = di-trans,octa-cis-undecaprenyl phosphate + phosphate + H(+). In terms of biological role, catalyzes the dephosphorylation of undecaprenyl diphosphate (UPP). Confers resistance to bacitracin. This chain is Undecaprenyl-diphosphatase, found in Prochlorococcus marinus (strain MIT 9215).